A 336-amino-acid polypeptide reads, in one-letter code: Mitochondrial amidoxime reducing component 2 (336 aa).

The transit peptide at 1–35 (MGAAGSSALARLGLPALPGPRWLGVAALGLAAVAL) directs the protein to the mitochondrion. Residues Lys-138, Lys-144, Lys-173, Lys-187, Lys-287, and Lys-294 each participate in a glycyl lysine isopeptide (Lys-Gly) (interchain with G-Cter in ubiquitin) cross-link. In terms of domain architecture, MOSC spans 188-334 (ARASNEIFPS…LKVGDPVYQM (147 aa)).

Component of a complex composed of cytochrome b5, NADH-cytochrome b5 reductase (CYB5R3) and MTARC2. Requires Mo-molybdopterin as cofactor. In terms of processing, ubiquitinated by PRKN during mitophagy, leading to its degradation and enhancement of mitophagy. Deubiquitinated by USP30.

The protein resides in the mitochondrion outer membrane. It is found in the peroxisome. It catalyses the reaction N(omega)-hydroxy-L-arginine + 2 Fe(II)-[cytochrome b5] + 2 H(+) = L-arginine + 2 Fe(III)-[cytochrome b5] + H2O. Catalyzes the reduction of N-oxygenated molecules, acting as a counterpart of cytochrome P450 and flavin-containing monooxygenases in metabolic cycles. As a component of prodrug-converting system, reduces a multitude of N-hydroxylated prodrugs particularly amidoximes, leading to increased drug bioavailability. May be involved in mitochondrial N(omega)-hydroxy-L-arginine (NOHA) reduction, regulating endogenous nitric oxide levels and biosynthesis. Postulated to cleave the N-OH bond of N-hydroxylated substrates in concert with electron transfer from NADH to cytochrome b5 reductase then to cytochrome b5, the ultimate electron donor that primes the active site for substrate reduction. This Bos taurus (Bovine) protein is Mitochondrial amidoxime reducing component 2 (MTARC2).